Reading from the N-terminus, the 314-residue chain is NAC domain-containing protein 10 (314 aa).

Residues 18 to 39 are compositionally biased toward polar residues; sequence VSNTDHPSVQLKDQSQSCVTSR. Disordered stretches follow at residues 18–48 and 150–182; these read VSNTDHPSVQLKDQSQSCVTSRPDSKISAET and YTTGTRKRRKVSTDEEGHETRWHKTGKTRPVLS. The NAC domain maps to 77 to 236; sequence LPAGVKFDPS…EPVLSKVFYQ (160 aa). A compositionally biased stretch (basic and acidic residues) spans 160–171; the sequence is VSTDEEGHETRW. Residues 187–242 mediate DNA binding; that stretch reads TGFKKILVLYTNYGRQKKPEKTNWVMHQYHLGSSEDEKDGEPVLSKVFYQTQPRQC.

Expressed in protoxylem and elongating interfascicular fiber cells of elongating internodes, developing metaxylem cells and interfascicular fibers of non-elongating internodes and developing secondary xylem of roots.

It is found in the nucleus. In terms of biological role, transcriptional activator that plays a regulatory role in the development of secondary cell wall fibers. Is a direct target of SND1. This Arabidopsis thaliana (Mouse-ear cress) protein is NAC domain-containing protein 10.